A 920-amino-acid chain; its full sequence is Isoleucine--tRNA ligase (920 aa).

A 'HIGH' region motif is present at residues 58–68 (PYANGHLHLGH). Glutamate 569 provides a ligand contact to L-isoleucyl-5'-AMP. The 'KMSKS' region signature appears at 610–614 (KMSKS). Lysine 613 contributes to the ATP binding site. Zn(2+)-binding residues include cysteine 895, cysteine 898, cysteine 910, and cysteine 913.

Belongs to the class-I aminoacyl-tRNA synthetase family. IleS type 1 subfamily. As to quaternary structure, monomer. The cofactor is Zn(2+).

Its subcellular location is the cytoplasm. It catalyses the reaction tRNA(Ile) + L-isoleucine + ATP = L-isoleucyl-tRNA(Ile) + AMP + diphosphate. In terms of biological role, catalyzes the attachment of isoleucine to tRNA(Ile). As IleRS can inadvertently accommodate and process structurally similar amino acids such as valine, to avoid such errors it has two additional distinct tRNA(Ile)-dependent editing activities. One activity is designated as 'pretransfer' editing and involves the hydrolysis of activated Val-AMP. The other activity is designated 'posttransfer' editing and involves deacylation of mischarged Val-tRNA(Ile). The chain is Isoleucine--tRNA ligase from Helicobacter pylori (strain ATCC 700392 / 26695) (Campylobacter pylori).